Here is a 459-residue protein sequence, read N- to C-terminus: Probable acetate kinase (459 aa).

Residue N9 coordinates Mg(2+). K16 lines the ATP pocket. A substrate-binding site is contributed by R100. D156 serves as the catalytic Proton donor/acceptor. ATP-binding positions include 216–220 and 299–301; these read HLGSG and DFR. Residues 308–338 form a disordered region; it reads TTTSSPTPSPNPNPNPNPDPNPDPNPDPQNQ. A compositionally biased stretch (pro residues) spans 314 to 334; sequence TPSPNPNPNPNPDPNPDPNPD. E441 lines the Mg(2+) pocket.

It belongs to the acetokinase family. Mg(2+) is required as a cofactor.

It carries out the reaction acetate + ATP = acetyl phosphate + ADP. The protein operates within metabolic intermediate biosynthesis; acetyl-CoA biosynthesis; acetyl-CoA from acetate: step 1/2. In Chaetomium globosum (strain ATCC 6205 / CBS 148.51 / DSM 1962 / NBRC 6347 / NRRL 1970) (Soil fungus), this protein is Probable acetate kinase.